The chain runs to 433 residues: GTPase Obg (433 aa).

Residues 1-159 form the Obg domain; it reads MKFVDSADLI…FEIRAELKVL (159 aa). The OBG-type G domain maps to 160 to 332; it reads ADVGFVGLPN…LLFMIYEELK (173 aa). GTP contacts are provided by residues 166 to 173, 191 to 195, 213 to 216, 284 to 287, and 313 to 315; these read GLPNAGKS, FTTIN, DLPG, NKMD, and SGL. Residues Ser-173 and Thr-193 each contribute to the Mg(2+) site. One can recognise an OCT domain in the interval 355–433; sequence KFEEQKEDIQ…VFDYELEWTD (79 aa).

Belongs to the TRAFAC class OBG-HflX-like GTPase superfamily. OBG GTPase family. Monomer. Requires Mg(2+) as cofactor.

It is found in the cytoplasm. In terms of biological role, an essential GTPase which binds GTP, GDP and possibly (p)ppGpp with moderate affinity, with high nucleotide exchange rates and a fairly low GTP hydrolysis rate. Plays a role in control of the cell cycle, stress response, ribosome biogenesis and in those bacteria that undergo differentiation, in morphogenesis control. This Mycoplasma capricolum subsp. capricolum (strain California kid / ATCC 27343 / NCTC 10154) protein is GTPase Obg.